The following is a 107-amino-acid chain: Small ribosomal subunit protein uS10c (107 aa).

It belongs to the universal ribosomal protein uS10 family. Part of the 30S ribosomal subunit.

It is found in the plastid. The protein resides in the chloroplast. Functionally, involved in the binding of tRNA to the ribosomes. In Phaeodactylum tricornutum (strain CCAP 1055/1), this protein is Small ribosomal subunit protein uS10c.